The primary structure comprises 691 residues: Methionine--tRNA ligase (691 aa).

The 'HIGH' region signature appears at 15–25 (PYTNGPIHIGH). Zn(2+)-binding residues include Cys-147, Cys-150, Cys-160, and Cys-163. Positions 336-340 (KLSTS) match the 'KMSKS' region motif. Thr-339 provides a ligand contact to ATP. The region spanning 589–691 (DFTKMDLRVG…DGVKAGTTIN (103 aa)) is the tRNA-binding domain.

The protein belongs to the class-I aminoacyl-tRNA synthetase family. MetG type 1 subfamily. As to quaternary structure, homodimer. Requires Zn(2+) as cofactor.

The protein resides in the cytoplasm. It carries out the reaction tRNA(Met) + L-methionine + ATP = L-methionyl-tRNA(Met) + AMP + diphosphate. Functionally, is required not only for elongation of protein synthesis but also for the initiation of all mRNA translation through initiator tRNA(fMet) aminoacylation. The sequence is that of Methionine--tRNA ligase from Christiangramia forsetii (strain DSM 17595 / CGMCC 1.15422 / KT0803) (Gramella forsetii).